An 865-amino-acid chain; its full sequence is Xylosyltransferase 2 (865 aa).

Over 1–15 (MVASARVQKLVRRYK) the chain is Cytoplasmic. Residues 16–36 (LAIATALAILLLQGLVVWSFS) form a helical; Signal-anchor for type II membrane protein membrane-spanning segment. At 37–865 (GLEEDEPGEK…GPVKADGRLR (829 aa)) the chain is on the lumenal side. Residues 39–157 (EEDEPGEKGR…EGAPQPTDNG (119 aa)) are disordered. The segment covering 53 to 65 (RPLDPGEGSKDTD) has biased composition (basic and acidic residues). Basic residues predominate over residues 73–82 (SAGRRHGRWR). Asn-122 carries N-linked (GlcNAc...) asparagine glycosylation. Low complexity predominate over residues 125–137 (GAAAGEALVGAAG). Cystine bridges form between Cys-162–Cys-190, Cys-206–Cys-448, Cys-467–Cys-480, and Cys-469–Cys-478. Residues Val-239, Asp-267, and 296–298 (TIW) each bind UDP-alpha-D-xylose. Asn-327 carries N-linked (GlcNAc...) asparagine glycosylation. UDP-alpha-D-xylose is bound at residue 400-401 (DW). UDP-alpha-D-xylose-binding positions include Ser-481 and 504 to 505 (RK). Disulfide bonds link Cys-581-Cys-833 and Cys-826-Cys-839. Asn-683 carries an N-linked (GlcNAc...) asparagine glycan.

The protein belongs to the glycosyltransferase 14 family. XylT subfamily. As to quaternary structure, monomer. It depends on Mg(2+) as a cofactor. Requires Mn(2+) as cofactor. Contains disulfide bonds.

Its subcellular location is the golgi apparatus membrane. The protein resides in the secreted. It carries out the reaction UDP-alpha-D-xylose + L-seryl-[protein] = 3-O-(beta-D-xylosyl)-L-seryl-[protein] + UDP + H(+). The protein operates within glycan metabolism; chondroitin sulfate biosynthesis. It functions in the pathway glycan metabolism; heparan sulfate biosynthesis. Functionally, catalyzes the first step in the biosynthesis of chondroitin sulfate, heparan sulfate and dermatan sulfate proteoglycans, such as DCN. Transfers D-xylose from UDP-D-xylose to specific serine residues of the core protein. This is Xylosyltransferase 2 (XYLT2) from Canis lupus familiaris (Dog).